The chain runs to 26 residues: Citropin-2.1.3 (26 aa).

In terms of tissue distribution, expressed by the dorsal and submental skin glands.

The protein localises to the secreted. The sequence is that of Citropin-2.1.3 from Ranoidea citropa (Australian Blue Mountains tree frog).